Consider the following 378-residue polypeptide: Erythronate-4-phosphate dehydrogenase (378 aa).

Residues serine 45 and threonine 66 each contribute to the substrate site. 2 residues coordinate NAD(+): aspartate 146 and threonine 175. The active site involves arginine 208. Residue aspartate 232 participates in NAD(+) binding. Residue glutamate 237 is part of the active site. Histidine 254 (proton donor) is an active-site residue. Glycine 257 provides a ligand contact to NAD(+). Tyrosine 258 is a binding site for substrate.

This sequence belongs to the D-isomer specific 2-hydroxyacid dehydrogenase family. PdxB subfamily. Homodimer.

The protein localises to the cytoplasm. The catalysed reaction is 4-phospho-D-erythronate + NAD(+) = (R)-3-hydroxy-2-oxo-4-phosphooxybutanoate + NADH + H(+). The protein operates within cofactor biosynthesis; pyridoxine 5'-phosphate biosynthesis; pyridoxine 5'-phosphate from D-erythrose 4-phosphate: step 2/5. Its function is as follows. Catalyzes the oxidation of erythronate-4-phosphate to 3-hydroxy-2-oxo-4-phosphonooxybutanoate. This Escherichia coli O127:H6 (strain E2348/69 / EPEC) protein is Erythronate-4-phosphate dehydrogenase.